The sequence spans 284 residues: Hydrogenase expression/formation protein HupQ (284 aa).

Positions 1 to 23 (MIGTQSILPPGFGPGSHGEEDRL) are disordered.

The protein belongs to the HupH/HyaF family.

This is Hydrogenase expression/formation protein HupQ (hupQ) from Azotobacter chroococcum mcd 1.